Consider the following 401-residue polypeptide: GRIP domain-containing protein C119.12 (401 aa).

Positions 7 to 296 (NETKLVENEN…TLLIGKLQHE (290 aa)) form a coiled coil. The GRIP domain occupies 315-366 (NNAEKIDKQLISNLFVSFLTLPRADTKRFEILQLISSVLDWNDTQREQTGLQ).

The protein resides in the golgi apparatus lumen. The sequence is that of GRIP domain-containing protein C119.12 from Schizosaccharomyces pombe (strain 972 / ATCC 24843) (Fission yeast).